The sequence spans 857 residues: Leucine--tRNA ligase (857 aa).

The short motif at 42-52 is the 'HIGH' region element; that stretch reads PYPSGKLHMGH. The 'KMSKS' region signature appears at 620 to 624; it reads KMSKS. ATP is bound at residue lysine 623.

The protein belongs to the class-I aminoacyl-tRNA synthetase family.

The protein localises to the cytoplasm. The enzyme catalyses tRNA(Leu) + L-leucine + ATP = L-leucyl-tRNA(Leu) + AMP + diphosphate. The protein is Leucine--tRNA ligase of Thiobacillus denitrificans (strain ATCC 25259 / T1).